A 356-amino-acid polypeptide reads, in one-letter code: NADH-quinone oxidoreductase subunit H (356 aa).

9 helical membrane passes run 17–37 (TGGILLVVIWVLLSLAFLLLA), 51–71 (PNVVGPFGLLQSFADFFKFVL), 83–103 (VVFILAPLISLILAFVGWAVV), 116–136 (VGILYLLAMSSLGVYGIIMGG), 162–182 (IGLIIITVILLAGSMNLSTIV), 202–222 (LVLLPVMVVAMGMFYISALAE), 261–281 (IVLMCAMISVLFFGGWNPGFP), 295–315 (LFLALVFYAKICFWFFMFAMA), and 334–354 (VFLPTSLVLVAAVAAWRVFGP).

The protein belongs to the complex I subunit 1 family. In terms of assembly, NDH-1 is composed of 14 different subunits. Subunits NuoA, H, J, K, L, M, N constitute the membrane sector of the complex.

The protein localises to the cell inner membrane. It carries out the reaction a quinone + NADH + 5 H(+)(in) = a quinol + NAD(+) + 4 H(+)(out). NDH-1 shuttles electrons from NADH, via FMN and iron-sulfur (Fe-S) centers, to quinones in the respiratory chain. The immediate electron acceptor for the enzyme in this species is believed to be ubiquinone. Couples the redox reaction to proton translocation (for every two electrons transferred, four hydrogen ions are translocated across the cytoplasmic membrane), and thus conserves the redox energy in a proton gradient. This subunit may bind ubiquinone. This chain is NADH-quinone oxidoreductase subunit H, found in Caulobacter vibrioides (strain ATCC 19089 / CIP 103742 / CB 15) (Caulobacter crescentus).